The chain runs to 527 residues: Light-independent protochlorophyllide reductase subunit B (527 aa).

Position 36 (aspartate 36) interacts with [4Fe-4S] cluster. Aspartate 290 (proton donor) is an active-site residue. 425-426 (GL) lines the substrate pocket.

This sequence belongs to the ChlB/BchB/BchZ family. In terms of assembly, protochlorophyllide reductase is composed of three subunits; ChlL, ChlN and ChlB. Forms a heterotetramer of two ChlB and two ChlN subunits. The cofactor is [4Fe-4S] cluster.

It catalyses the reaction chlorophyllide a + oxidized 2[4Fe-4S]-[ferredoxin] + 2 ADP + 2 phosphate = protochlorophyllide a + reduced 2[4Fe-4S]-[ferredoxin] + 2 ATP + 2 H2O. The protein operates within porphyrin-containing compound metabolism; chlorophyll biosynthesis (light-independent). Functionally, component of the dark-operative protochlorophyllide reductase (DPOR) that uses Mg-ATP and reduced ferredoxin to reduce ring D of protochlorophyllide (Pchlide) to form chlorophyllide a (Chlide). This reaction is light-independent. The NB-protein (ChlN-ChlB) is the catalytic component of the complex. This chain is Light-independent protochlorophyllide reductase subunit B, found in Synechococcus sp. (strain RCC307).